A 311-amino-acid chain; its full sequence is Heme A synthase (311 aa).

The Cytoplasmic portion of the chain corresponds to 1-6 (MQRFIK). Residues 7 to 27 (WLAVITSLDLLIVLLGGALVT) form a helical membrane-spanning segment. Over 28 to 62 (KTGSGQGCGKSWPLCNGEFVPSNLSMETIIELSHR) the chain is Extracellular. C35 and C42 form a disulfide bridge. E58 is a catalytic residue. A heme o-binding site is contributed by H61. Residues 63 to 83 (LTSGSAGILVTLLCILSWKYY) traverse the membrane as a helical segment. The Cytoplasmic portion of the chain corresponds to 84-91 (KHVRETKT). A helical membrane pass occupies residues 92-112 (LAILSFVFLVAQALMGAAAVV). At 113-121 (WGQMPAVLA) the chain is on the extracellular side. Residues 122–142 (IHFGISLISFASVILLTCLIF) traverse the membrane as a helical segment. H123 is a heme o binding site. Topologically, residues 143–159 (EIDQKFDARSLIMDKKM) are cytoplasmic. Residues 160–180 (KFHIYGVTIYSYIVVYTGALV) form a helical membrane-spanning segment. Over 181–211 (RHERASLACPDFPLCSKNRPMPTQLHEWVQM) the chain is Extracellular. A disulfide bridge links C189 with C195. The helical transmembrane segment at 212–232 (GHRVAAMLIFAWILYAMILAI) threads the bilayer. H213 is a heme b binding site. At 233–243 (RHYKQQPVVYW) the chain is on the cytoplasmic side. Residues 244–264 (GWIISFILVTLQAVVGVLVVF) traverse the membrane as a helical segment. Over 265 to 271 (TNASLAM) the chain is Extracellular. Residues 272 to 292 (ALLHSLFISCLFAVLCYLVML) traverse the membrane as a helical segment. H275 contributes to the heme b binding site. Residues 293–311 (GTRIKVNAKEAGSTSKQTK) lie on the Cytoplasmic side of the membrane.

This sequence belongs to the COX15/CtaA family. Type 1 subfamily. In terms of assembly, interacts with CtaB. Heme b serves as cofactor.

It localises to the cell membrane. It carries out the reaction Fe(II)-heme o + 2 A + H2O = Fe(II)-heme a + 2 AH2. It participates in porphyrin-containing compound metabolism; heme A biosynthesis; heme A from heme O: step 1/1. Its function is as follows. Catalyzes the conversion of heme O to heme A by two successive hydroxylations of the methyl group at C8. The first hydroxylation forms heme I, the second hydroxylation results in an unstable dihydroxymethyl group, which spontaneously dehydrates, resulting in the formyl group of heme A. This is Heme A synthase from Bacillus cereus (strain G9842).